A 237-amino-acid polypeptide reads, in one-letter code: Phosphoribosylaminoimidazole-succinocarboxamide synthase (237 aa).

Belongs to the SAICAR synthetase family.

The enzyme catalyses 5-amino-1-(5-phospho-D-ribosyl)imidazole-4-carboxylate + L-aspartate + ATP = (2S)-2-[5-amino-1-(5-phospho-beta-D-ribosyl)imidazole-4-carboxamido]succinate + ADP + phosphate + 2 H(+). Its pathway is purine metabolism; IMP biosynthesis via de novo pathway; 5-amino-1-(5-phospho-D-ribosyl)imidazole-4-carboxamide from 5-amino-1-(5-phospho-D-ribosyl)imidazole-4-carboxylate: step 1/2. This is Phosphoribosylaminoimidazole-succinocarboxamide synthase from Pseudomonas fluorescens (strain ATCC BAA-477 / NRRL B-23932 / Pf-5).